The chain runs to 395 residues: Thyroid hormone receptor beta (395 aa).

The interval 1-31 (MSEQADKCNSRWKDEAMQNGYIPSYLDKDEL) is modulating. Residues 29-106 (DELCVVCGDK…VGMATDLVLD (78 aa)) constitute a DNA-binding region (nuclear receptor). Residues cysteine 32, cysteine 35, cysteine 49, cysteine 52, cysteine 70, cysteine 76, cysteine 86, and cysteine 89 each coordinate Zn(2+). 2 NR C4-type zinc fingers span residues 32 to 52 (CVVCGDKATGYHYRCITCEGC) and 70 to 89 (CKYEGKCVIDKVTRNQCQEC). Residues 142 to 395 (EEWEMIRVVT…PPLFLEVFED (254 aa)) form the NR LBD domain. The 3,3',5-triiodo-L-thyronine site is built by arginine 216, asparagine 265, and histidine 369.

It belongs to the nuclear hormone receptor family. NR1 subfamily. Interacts (via the ligand-binding domain) with ncoa2. As to expression, widely expressed in a range of adult tissues including the brain, eye, fin, gill, intestine, liver, swim bladder and ovary. In the eye, expressed in the outer nuclear layer of the retina.

Its subcellular location is the nucleus. Its function is as follows. Nuclear hormone receptor that can act as a repressor or activator of transcription. High affinity receptor for the thyroid gland hormone triiodothyronine (T3). Transactivating activity is ligand-dependent, and is repressed in the absence of T3. The chain is Thyroid hormone receptor beta (thrb) from Danio rerio (Zebrafish).